The primary structure comprises 21 residues: DYE-linked aldehyde dehydrogenase, gamma chain (21 aa).

Heterotetramer composed of an alpha, a beta and two gamma chains. Requires [2Fe-2S] cluster as cofactor.

Its function is as follows. Active with aldehydes and formate esters as substrates. The sequence is that of DYE-linked aldehyde dehydrogenase, gamma chain from Amycolatopsis methanolica.